The sequence spans 88 residues: Small ribosomal subunit protein bS20 (88 aa).

The segment at 1-27 (MANIKSQIKRNKTNEKARLRNKAVKSS) is disordered.

The protein belongs to the bacterial ribosomal protein bS20 family.

Its function is as follows. Binds directly to 16S ribosomal RNA. In Streptomyces griseus subsp. griseus (strain JCM 4626 / CBS 651.72 / NBRC 13350 / KCC S-0626 / ISP 5235), this protein is Small ribosomal subunit protein bS20.